We begin with the raw amino-acid sequence, 651 residues long: Mitochondrial sodium/calcium exchanger protein (651 aa).

The chain crosses the membrane as a helical span at residues 51–71; the sequence is VILIILGILYLIILFVIMSSI. The Cytoplasmic segment spans residues 72–91; that stretch reads ADDFFCPAISGIVSHLRMSE. The helical transmembrane segment at 92–112 threads the bilayer; sequence SIAGVTFLAFGNGAPDVFSSI. Over 113–126 the chain is Extracellular; sequence SSVLTTPKPKADLA. A helical membrane pass occupies residues 127-147; the sequence is LGDLFGTSIFVTTVVLAIIIF. The Cytoplasmic segment spans residues 148 to 161; sequence TKSFKVAIIPTLRD. Residues 162 to 182 traverse the membrane as a helical segment; sequence LIFYMTTLAFIVFCFLKFDKI. Position 183 (glutamate 183) is a topological domain, extracellular. Residues 184–204 form a helical membrane-spanning segment; the sequence is VWMPATFLGIYGVYVVTVIIL. Residues 205–398 are Cytoplasmic-facing; it reads GIYRTHRKKR…PSRDEFSEMN (194 aa). The chain crosses the membrane as a helical span at residues 399–419; sequence IFIKIVTVIKVVPVFFFKLTV. The Extracellular portion of the chain corresponds to 420 to 428; the sequence is PSNEMSWCK. Residues 429 to 449 form a helical membrane-spanning segment; that stretch reads PLFILHCFASIQFALFSIQII. Residues 450–458 lie on the Cytoplasmic side of the membrane; the sequence is TLKPFDGSP. The helical transmembrane segment at 459–479 threads the bilayer; sequence GLWLYGLGFSAILAMVAMYFL. Residues 480–486 are Extracellular-facing; that stretch reads PLSKEQK. The chain crosses the membrane as a helical span at residues 487 to 507; the sequence is YYKEIYSYLGFLMSIAWIYAT. Residues 508–510 lie on the Cytoplasmic side of the membrane; it reads SNE. Residues 511–531 traverse the membrane as a helical segment; the sequence is IVSVVTMIGVVTGLSMELLGL. Over 532–559 the chain is Extracellular; the sequence is TIMAWSNCIGDIVADIAVVKQGYPKMAM. A helical transmembrane segment spans residues 560–580; the sequence is AAAIGGPLFNLLIGFGLPFTI. At 581 to 595 the chain is on the cytoplasmic side; sequence AAAQGKEMELLINPV. A helical transmembrane segment spans residues 596-616; that stretch reads YRLLMLFLGISLVTTFVALFI. Residues 617-626 are Extracellular-facing; the sequence is QRFTVRRPHA. The chain crosses the membrane as a helical span at residues 627 to 647; it reads VLLIFIFVVFLIFICLAEFHV. Residues 648-651 are Cytoplasmic-facing; sequence LEWN.

It belongs to the Ca(2+):cation antiporter (CaCA) (TC 2.A.19) family. SLC24A subfamily. Expressed in the seam cells of the organism. Expression is visible in the seam cells across all larval stages, and expression persists into the adult stage of the organism.

It is found in the mitochondrion inner membrane. Its activity is regulated as follows. Inhibited by the sodium/calcium exchanger inhibitor CGP-37157. In terms of biological role, mitochondrial sodium/calcium antiporter that mediates sodium-dependent calcium efflux from mitochondrion, thereby acting as a key regulator of mitochondrion calcium homeostasis. Required for patterning of neural circuits: functions in the same pathway as RAC-dependent effectors of the unc-6/netrin signaling pathway to set left/ right patterning of the VD/DD GABAergic circuit. This Caenorhabditis elegans protein is Mitochondrial sodium/calcium exchanger protein.